A 251-amino-acid polypeptide reads, in one-letter code: uncharacterized protein (251 aa).

36–43 (GKQGTGKT) is an ATP binding site. A disordered region spans residues 230-251 (SDNKTENPSNPSLLTKIDDVTR).

In terms of biological role, this protein may be involved in virus assembly. Essential for virus function. This is an uncharacterized protein from Sulfolobus spindle-shape virus 1 (SSV1).